Here is an 808-residue protein sequence, read N- to C-terminus: Probable mannosyl-oligosaccharide glucosidase (808 aa).

Residues 1–11 lie on the Cytoplasmic side of the membrane; that stretch reads MVSDMLGGNKR. A helical; Signal-anchor for type II membrane protein transmembrane segment spans residues 12 to 31; sequence WILFGLLSFLLNCVLVSCSV. The Lumenal segment spans residues 32–808; that stretch reads EDIEKAANDS…LVVNIMSENY (777 aa). Asn39 carries N-linked (GlcNAc...) asparagine glycosylation. The active-site Proton donor is the Asp580. Glu778 (proton acceptor) is an active-site residue.

This sequence belongs to the glycosyl hydrolase 63 family.

The protein resides in the endoplasmic reticulum membrane. The enzyme catalyses N(4)-(alpha-D-Glc-(1-&gt;2)-alpha-D-Glc-(1-&gt;3)-alpha-D-Glc-(1-&gt;3)-alpha-D-Man-(1-&gt;2)-alpha-D-Man-(1-&gt;2)-alpha-D-Man-(1-&gt;3)-[alpha-D-Man-(1-&gt;2)-alpha-D-Man-(1-&gt;3)-[alpha-D-Man-(1-&gt;2)-alpha-D-Man-(1-&gt;6)]-alpha-D-Man-(1-&gt;6)]-beta-D-Man-(1-&gt;4)-beta-D-GlcNAc-(1-&gt;4)-beta-D-GlcNAc)-L-asparaginyl-[protein] + H2O = N(4)-(alpha-D-Glc-(1-&gt;3)-alpha-D-Glc-(1-&gt;3)-alpha-D-Man-(1-&gt;2)-alpha-D-Man-(1-&gt;2)-alpha-D-Man-(1-&gt;3)-[alpha-D-Man-(1-&gt;2)-alpha-D-Man-(1-&gt;3)-[alpha-D-Man-(1-&gt;2)-alpha-D-Man-(1-&gt;6)]-alpha-D-Man-(1-&gt;6)]-beta-D-Man-(1-&gt;4)-beta-D-GlcNAc-(1-&gt;4)-beta-D-GlcNAc)-L-asparaginyl-[protein] + beta-D-glucose. Cleaves the distal alpha 1,2-linked glucose residue from the Glc(3)Man(9)GlcNAc(2) oligosaccharide precursor highly specifically. The sequence is that of Probable mannosyl-oligosaccharide glucosidase from Schizosaccharomyces pombe (strain 972 / ATCC 24843) (Fission yeast).